We begin with the raw amino-acid sequence, 36 residues long: Photosystem I reaction center subunit VIII (36 aa).

A helical transmembrane segment spans residues 6–28 (LPSIFVPLVGLMFPAIAMASLSL).

This sequence belongs to the PsaI family.

It localises to the plastid. The protein localises to the chloroplast thylakoid membrane. Its function is as follows. May help in the organization of the PsaL subunit. In Calycanthus floridus var. glaucus (Eastern sweetshrub), this protein is Photosystem I reaction center subunit VIII.